Reading from the N-terminus, the 84-residue chain is Acid stress protein IbaG (84 aa).

Belongs to the BolA/IbaG family.

Its function is as follows. Involved in cell resistance against acid stress. The polypeptide is Acid stress protein IbaG (Escherichia coli O6:H1 (strain CFT073 / ATCC 700928 / UPEC)).